The following is a 201-amino-acid chain: Probable GTP-binding protein EngB (201 aa).

The EngB-type G domain occupies 22 to 197 (TFPEYAFIGR…LNYIESINKE (176 aa)). Residues 30–37 (GRSNVGKS), 57–61 (GKTML), 75–78 (DLPG), 142–145 (TKAD), and 175–178 (ITSS) contribute to the GTP site. The Mg(2+) site is built by Ser37 and Thr59.

It belongs to the TRAFAC class TrmE-Era-EngA-EngB-Septin-like GTPase superfamily. EngB GTPase family. Mg(2+) is required as a cofactor.

Functionally, necessary for normal cell division and for the maintenance of normal septation. The chain is Probable GTP-binding protein EngB from Bacteroides fragilis (strain YCH46).